The primary structure comprises 308 residues: tRNA pseudouridine synthase B (308 aa).

Asp-46 (nucleophile) is an active-site residue.

This sequence belongs to the pseudouridine synthase TruB family. Type 1 subfamily.

It catalyses the reaction uridine(55) in tRNA = pseudouridine(55) in tRNA. Functionally, responsible for synthesis of pseudouridine from uracil-55 in the psi GC loop of transfer RNAs. The polypeptide is tRNA pseudouridine synthase B (Marinomonas sp. (strain MWYL1)).